We begin with the raw amino-acid sequence, 84 residues long: Insulin-like peptide 05 (84 aa).

A signal peptide spans 1–22 (MKTPILFVVVVAVLIVTDSAEG). Residues 23–37 (FKGKANSFLKPLQRR) constitute a propeptide that is removed on maturation. 3 cysteine pairs are disulfide-bonded: Cys-43–Cys-48, Cys-44–Cys-73, and Cys-57–Cys-61.

The protein belongs to the insulin family.

Its subcellular location is the secreted. Functionally, insulin decreases blood glucose concentration. May have evolved to activate insulin receptors (INSR) in vertebrates. Molecular docking studies reveals unique interaction with the human insulin receptor. In vivo, insulin-like peptide injection reduces blood glucose levels in two models of zebrafish diabetes (streptozotocin- and glucose-induced). Also shorter swimming distance of zebrafish larvae, an effect which is not observed with human insulin. The sequence is that of Insulin-like peptide 05 from Exaiptasia diaphana (Tropical sea anemone).